We begin with the raw amino-acid sequence, 426 residues long: Enolase (426 aa).

Gln163 is a binding site for (2R)-2-phosphoglycerate. Catalysis depends on Glu205, which acts as the Proton donor. Mg(2+) contacts are provided by Asp242, Glu286, and Asp313. Positions 338, 367, 368, and 389 each coordinate (2R)-2-phosphoglycerate. The active-site Proton acceptor is Lys338.

The protein belongs to the enolase family. It depends on Mg(2+) as a cofactor.

Its subcellular location is the cytoplasm. The protein localises to the secreted. It is found in the cell surface. It carries out the reaction (2R)-2-phosphoglycerate = phosphoenolpyruvate + H2O. It participates in carbohydrate degradation; glycolysis; pyruvate from D-glyceraldehyde 3-phosphate: step 4/5. Its function is as follows. Catalyzes the reversible conversion of 2-phosphoglycerate (2-PG) into phosphoenolpyruvate (PEP). It is essential for the degradation of carbohydrates via glycolysis. This Helicobacter pylori (strain Shi470) protein is Enolase.